Consider the following 1355-residue polypeptide: NACHT, LRR and PYD domains-containing protein 1 homolog (1355 aa).

In terms of domain architecture, NACHT spans Lys257–Cys458. Position 263-270 (Gly263–Ser270) interacts with ATP. The ZU5 stretch occupies residues Asp977–Phe1109. An FIIND domain is found at Asp977–Ser1252. The segment at Ser1110–Ser1252 is UPA. The region spanning Leu1278–Asp1354 is the CARD domain.

Belongs to the NLRP family. As to quaternary structure, interacts with the C-terminal part of nlrp1 (NACHT, LRR and PYD domains-containing protein 1, C-terminus) in absence of pathogens and other damage-associated signals. In terms of assembly, interacts with the N-terminal part of nlrp1 (NACHT, LRR and PYD domains-containing protein 1, N-terminus) in absence of pathogens and other damage-associated signals. Homomultimer; forms the nlrp1 inflammasome polymeric complex, a filament composed of homopolymers of this form in response to pathogens and other damage-associated signals. The nlrp1 inflammasome polymeric complex associates with pycard/asc. Interacts (via CARD domain) with pycard/asc (via CARD domain); leading to pro-inflammatory caspases (caspa and/or caspb) recruitment. Pro-caspase-a and pro-caspase-b filament formation increases local enzyme concentration, resulting in trans-autocleavage and activation. Active caspa and caspb then processes il1b and il18 precursors, leading to the release of mature cytokines in the extracellular milieu and inflammatory response. Post-translationally, autocatalytically cleaved. Autocatalytic cleavage in FIIND region occurs constitutively, prior to activation signals, and is required for inflammasome activity (IL1B release), possibly by facilitating pro-inflammatory caspases (caspa and/or caspb) binding. Both N- and C-terminal parts remain associated non-covalently. Ubiquitinated in response to pathogen-associated signals, leading to its degradation by the proteasome and subsequent release of the cleaved C-terminal part of the protein (NACHT, LRR and PYD domains-containing protein 1, C-terminus), which polymerizes and forms the nlrp1 inflammasome. Expressed in adult spleen, head kidney, gill and skin and also in the embryo.

It is found in the cytoplasm. Its subcellular location is the inflammasome. Its activity is regulated as follows. nlrp1 inflammasome is activated by pathogens and other damage-associated signals: activation promotes ubiquitination and degradation of the N-terminal part, releasing the cleaved C-terminal part of the protein (NACHT, LRR and PYD domains-containing protein 1, C-terminus), which polymerizes and forms the nlrp1 inflammasome. Acts as the sensor component of the nlrp1 inflammasome, which mediates inflammasome activation in response to various pathogen-associated signals, leading to subsequent pyroptosis. Inflammasomes are supramolecular complexes that assemble in the cytosol in response to pathogens and other damage-associated signals and play critical roles in innate immunity and inflammation. Acts as a recognition receptor (PRR): recognizes specific pathogens and other damage-associated signals, and mediates the formation of the inflammasome polymeric complex. In response to pathogen-associated signals, the N-terminal part of nlrp1 is degraded by the proteasome, releasing the cleaved C-terminal part of the protein (NACHT, LRR and PYD domains-containing protein 1, C-terminus), which polymerizes to initiate the formation of the inflammasome complex: the inflammasome recruits and activate pro-inflammatory caspases (caspa and/or caspb), leading to pyroptosis. Its function is as follows. Constitutes the precursor of the nlrp1 inflammasome, which mediates autoproteolytic processing within the FIIND domain to generate the N-terminal and C-terminal parts, which are associated non-covalently in absence of pathogens and other damage-associated signals. In terms of biological role, regulatory part that prevents formation of the nlrp1 inflammasome: in absence of pathogens and other damage-associated signals, interacts with the C-terminal part of nlrp1 (NACHT, LRR and PYD domains-containing protein 1, C-terminus), preventing activation of the nlrp1 inflammasome. In response to pathogen-associated signals, this part is ubiquitinated and degraded by the proteasome, releasing the cleaved C-terminal part of the protein, which polymerizes and forms the nlrp1 inflammasome. Functionally, constitutes the active part of the nlrp1 inflammasome. In absence of pathogens and other damage-associated signals, interacts with the N-terminal part of nlrp1 (NACHT, LRR and PYD domains-containing protein 1, N-terminus), preventing activation of the nlrp1 inflammasome. In response to pathogen-associated signals, the N-terminal part of nlrp1 is degraded by the proteasome, releasing this form, which polymerizes to form the nlrp1 inflammasome complex: the nlrp1 inflammasome complex then directly recruits and activates pro-inflammatory caspases (caspa and/or caspb) activation, leading to subsequent pyroptosis. In Danio rerio (Zebrafish), this protein is NACHT, LRR and PYD domains-containing protein 1 homolog.